Reading from the N-terminus, the 339-residue chain is Cathepsin L-like peptidase (339 aa).

Positions 1 to 16 (MKILILLVAFVAAANA) are cleaved as a signal peptide. The propeptide at 17–121 (VSLYELVKEE…VTFIEPANVE (105 aa)) is activation peptide. N-linked (GlcNAc...) asparagine glycosylation is present at N95. 3 disulfide bridges follow: C143-C186, C177-C219, and C278-C328. The active site involves C146. Catalysis depends on residues H285 and N306.

This sequence belongs to the peptidase C1 family. Dimer of a heavy and a light chain linked by disulfide bonds. Interacts with cystatin; the interaction results in inhibition of cathepsin L-like peptidase activity. As to expression, salivary gland. Midgut.

It carries out the reaction Specificity close to that of papain. As compared to cathepsin B, cathepsin L exhibits higher activity toward protein substrates, but has little activity on Z-Arg-Arg-NHMec, and no peptidyl-dipeptidase activity.. More active in the presence of a reducing agent DTT. Functionally, proteinase exhibiting preference for Leu, Val and Phe residues at the P2 position. The chain is Cathepsin L-like peptidase from Aedes aegypti (Yellowfever mosquito).